Reading from the N-terminus, the 4451-residue chain is MSTFKKEHVQDMYRLSPMQEGMLFHALLDKDKNAHLVQMSIAIEGIVDVELLSESLNILIDRYDVFRTTFLHEKIKQPLQVVLKERPVQLQFKDISSLDEEKREQAIEQYKYQDGETVFDLTRDPLMRVAIFQTGKVNYQMIWSFHHILMDGWCFNIIFNDLFNIYLSLKEKKPLQLEAVQPYKQFIKWLEKQDKQEALRYWKEHLMNYDQSVTLPKKKAAINNTTYEPAQFRFAFDKVLTQQLLRIANQSQVTLNIVFQTIWGIVLQKYNSTNHVVYGSVVSGRPSEISGIEKMVGLFINTLPLRIQTQKDQSFIELVKTVHQNVLFSQQHEYFPLYEIQNHTELKQNLIDHIMVIENYPLVEELQKNSIMQKVGFTVRDVKMFEPTNYDMTVMVLPRDEISVRLDYNAAVYDIDFIKKIEGHMKEVALCVANNPHVLVQDVPLLTKQEKQHLLVELHDSITEYPDKTIHQLFTEQVEKTPEHVAVVFEDEKVTYRELHERSNQLARFLREKGVKKESIIGIMMERSVEMIVGILGILKAGGAFVPIDPEYPKERIGYMLDSVRLVLTQRHLKDKFAFTKETIVIEDPSISHELTEEIDYINESEDLFYIIYTSGTTGKPKGVMLEHKNIVNLLHFTFEKTNINFSDKVLQYTTCSFDVCYQEIFSTLLSGGQLYLIRKETQRDVEQLFDLVKRENIEVLSFPVAFLKFIFNEREFINRFPTCVKHIITAGEQLVVNNEFKRYLHEHNVHLHNHYGPSETHVVTTYTINPEAEIPELPPIGKPISNTWIYILDQEQQLQPQGIVGELYISGANVGRGYLNNQELTAEKFFADPFRPNERMYRTGDLARWLPDGNIEFLGRADHQVKIRGHRIELGEIEAQLLNCKGVKEAVVIDKADDKGGKYLCAYVVMEVEVNDSELREYLGKALPDYMIPSFFVPLDQLPLTPNGKIDRKSLPNLEGIVNTNAKYVVPTNELEEKLAKIWEEVLGISQIGIQDNFFSLGGHSLKAITLISRMNKECNVDIPLRLLFEAPTIQEISNYINGAKKESYVAIQPVPEQEYYPVSSVQKRMFILNEFDRSGTAYNLPGVMFLDGKLNYRQLEAAVKKLVERHEALRTSFHSINGEPVQRVHQNVELQIAYSESTEDQVERIIAEFMQPFALEVRPLLRVGLVKLEAERHLFIMDMHHIISDGVSMQIMIQEIADLYKEKELPTLGIQYKDFTVWHNRLLQSDVIEKQEAYWLNVFTEEIPVLNLPTDYPRPTIQSFDGKRFTFSTGKQLMDDLYKVATETGTTLYMVLLAAYNVFLSKYSGQDDIVVGTPIAGRSHADVENMLGMFVNTLAIRSRLNNEDTFKDFLANVKQTALHAYENPDYPFDTLVEKLGIQRDLSRNPLFDTMFVLQNTDRKSFEVEQITITPYVPNSRHSKFDLTLEVSEEQNEILLCLEYCTKLFTDKTVERMAGHFLQILHAIVGNPTIIISEIEILSEEEKQHILFEFNDTKTTYPHMQTIQGLFEEQVEKTPDHVAVGWKDQTLTYRELNERANQVARVLRQKGVQPDNIVGLLVERSPEMLVGIMGILKAGGAYLPLDPEYPADRISYMIQDCGVRIMLTQQHLLSLVHDEFDCVILDEDSLYKGDSSNLAPVNQAGDLAYIMYTSGSTGKPKGVMVEHRNVIRLVKNTNYVQVREDDRIIQTGAIGFDALTFEVFGSLLHGAELYPVTKDVLLDAEKLHKFLQANQITIMWLTSPLFNQLSQGTEEMFAGLRSLIVGGDALSPKHINNVKRKCPNLTMWNGYGPTENTTFSTCFLIDKEYDDNIPIGKAISNSTVYIMDRYGQLQPVGVPGELCVGGDGVARGYMNQPALTEEKFVPNPFAPGERMYRTGDLARWLPDGTIEYLGRIDQQVKIRGYRIEPGEIETLLVKHKKVKESVIMVVEDNNGQKALCAYYVPEEEVTVSELREYIAKELPVYMVPAYFVQIEQMPLTQNGKVNRSALPKPDGEFGTATEYVAPSSDIEMKLAEIWHNVLGVNKIGVLDNFFELGGHSLRAMTMISQVHKEFDVELPLKVLFETPTISALAQYIADGQKGMYLAIQPVTPTDYYPVSSAQKRMYILYEFEGAGITYNVPNVMFIEGKLDYQRFEYAIKSLVNRHEALRTSFYSLNGEPVQRVHQNVELQIAYSEAKEDEIEQIVESFVQPFDLEIAPLLRVGLVKLASDRYLFLMDMHHIISDGVSMQIITKEIADLYKGKELAELHIQYKDFAVWQNEWFQSDALEKQKTYWLNTFAEDIPVLNLSTDYPRPTIQSFEGDIVTFSAGKQLAEELKRLAAETGTTLYMLLLAAYNVLLHKYSGQEEIVVGTPIAGRSHADVENIVGMFVNTLALKNTPIAVRTFHEFLLEVKQNALEAFENQDYPFENLIEKLQVRRDLSRNPLFDTMFSLSNIDEQVEIGIEGLNFSPYEMQYWIAKFDISFDILEKQDDIQFYFNYCTNLFKKETIERLATHFMHILQEIVINPEIKLCEINMLSEEEQQRVLYDFNGTDATYATNKIFHELFEEQVEKTPDHIAVIDEREKLSYQELNAKANQLARVLRQKGVQPNSMVGIMVDRSLDMIVGMLGVLKAGGAYVPIDIDYPQERISYMMEDSGAALLLTQQKLTQQIAFSGDILYLDQEEWLHEEASNLEPIARPHYIAYIIYTSGTTGKPKGVMIEHQSYVNVAMAWKDAYRLDTFPVRLLQMASFAFAFDVSAGDFARALLTGGQLIVCPNEVKMDPASLYAIIKKYDITIFEATPALVIPLMEYIYEQKLDISQLQILIVGSDSCSMEDFKTLVSRFGSTIRIVNSYGVTEACIDSSYYEQPLSSLHVTGTVPIGKPYANMKMYIMNQYLQIQPVGVIGELCIGGAGVARGYLNRPDLTAEKFVPNPFVPGEKLYRTGDLARWMPDGNVEFLGRNDHQVKIRGIRIELGEIEAQLRKHDSIKEATVIAREDHMKEKYLCAYMVTEGEVNVAELRAYLANDRAAMIPSYFVSLEAMPLTANGKIDKRSLPEPDGSISIGTEYDRPRTMLEGKLEEIWKDVLGLQRVGIHDDFFTIGGHSLKAMAVISQVHKECQTEVPLRVLFETPTIQGLAKYIEETDTEQYMAIQPVSGQDYYPVSSAQKRMFIVNQFVGVGISYNMPSIMLIEGKLERTRLESAFKRLIERHESLRTSFEIINGKPVQKIHEEVDFNMSYQVASNEQVEKMIDEFIQPFDLSVAPLLRVELLKLEEDRHVLIFDMHHIISDGISSNILMKELGELYQGNALPELRIQYKDFAVWQNEWFQSEAFKKQEEYWVNVFADERPILDIPTDYPRPMQQSFDGAQLTFGTGKQLMDGLYRVATETGTTLYMVLLAAYNVLLSKYSGQEDIIVGTPIVGRSHTDLENIVGMFVNTLAMRNKPEGEKTFKAFVSEIKQNALAAFENQDYPFEELIEKLEIQRDLSRNPLFDTLFSLQNIGEESFELAELTCKPFDLVSKLEHAKFDLSLVAVVFEEEIAFGLQYCTKLYKEKTVEQLAQHFIQIVKAIVENPDVKLSDIDMLSEEEKKQIMLEFNDTKIQYTQNQTIQELFEEQVKKTPEHIAIVWEGQALIYHELNIKANQLARVLREKGVTPNHPVAIMTERSLEMIVGIFSILKAGGAYVPIDPAYPQERIQYLLEDSGAALLLTQSHVLNKLPVDIEWLDLTDEQNYVEDGTNLPFMNQSTDLAYIIYTSGTTGKPKGVMIEHQSIINCLQWRKEEYEFGPGDTALQVFSFAFDGFVASLFAPILAGATSVLPKEEEAKDPVALKKLIASEEITHYYGVPSLFSAILDVSSSKDLQNLRCVTLGGEKLPAQIVKKIKEKNKEIEVNNEYGPTENSVVTTIMRDIQVEQEITIGRPLSNVDVYIVNCNHQLQPVGVVGELCIGGQGLARGYLNKPELTADKFVVNPFVPGERMYKTGDLAKWRSDGMIEYVGRVDEQVKVRGYRIELGEIESAILEYEKIKEAVVMVSEHTASEQMLCAYIVGEEDVLTLDLRSYLAKLLPSYMIPNYFIQLDSIPLTPNGKVDRKALPEPQTIGLMAREYVAPRNEIEAQLVLIWQEVLGIELIGITDNFFELGGHSLKATLLVAKIYEYMQIEMPLNVVFKHSTIMKIAEYITHQESENNVHQPILVNVEADREALSLNGEKQRKNIELPILLNEETDRNVFLFAPIGAQGVFYKKLAEQIPTASLYGFDFIEDDDRIQQYIESMIQTQSDGQYVLIGYSSGGNLAFEVAKEMERQGYSVSDLVLFDVYWKGKVFEQTKEEEEENIKIIMEELRENPGMFNMTREDFELYFANEFVKQSFTRKMRKYMSFYTQLVNYGEVEATIHLIQAEFEEEKIDENEKADEEEKTYLEEKWNEKAWNKAAKRFVKYNGYGAHSNMLGGDGLERNSSILKQILQGTFVVK.

Positions 467-1044 (DKTIHQLFTE…IQEISNYING (578 aa)) are domain 1 (proline-activating). 4 Carrier domains span residues 971-1046 (VPTN…NGAK), 2006-2081 (APSS…ADGQ), 3052-3127 (RPRT…EETD), and 4090-4165 (APRN…THQE). An O-(pantetheine 4'-phosphoryl)serine mark is found at serine 1006, serine 2041, serine 3087, and serine 4125. Residues 1521–2080 (DHVAVGWKDQ…SALAQYIADG (560 aa)) are domain 2 (valine-activating). The segment at 2538–3135 (YATNKIFHEL…TDTEQYMAIQ (598 aa)) is domain 3 (ornithine-activating). The domain 4 (leucine-activating) stretch occupies residues 3591 to 4173 (IQELFEEQVK…QESENNVHQP (583 aa)).

Belongs to the ATP-dependent AMP-binding enzyme family. Large multienzyme complex of GrsA and GrsB. It depends on pantetheine 4'-phosphate as a cofactor.

Its pathway is antibiotic biosynthesis; gramicidin S biosynthesis. Its function is as follows. This protein is a multifunctional enzyme, able to activate and polymerize the amino acids Pro, Val, Orn and Leu. Activation sites for these AA consist of individual domains. This chain is Gramicidin S synthase 2 (grsB), found in Aneurinibacillus migulanus (Bacillus migulanus).